A 318-amino-acid polypeptide reads, in one-letter code: tRNA dimethylallyltransferase (318 aa).

21-28 (GPTATGKS) serves as a coordination point for ATP. Residue 23–28 (TATGKS) participates in substrate binding. Residues 46–49 (DSMQ) form an interaction with substrate tRNA region.

The protein belongs to the IPP transferase family. In terms of assembly, monomer. Mg(2+) serves as cofactor.

It catalyses the reaction adenosine(37) in tRNA + dimethylallyl diphosphate = N(6)-dimethylallyladenosine(37) in tRNA + diphosphate. Its function is as follows. Catalyzes the transfer of a dimethylallyl group onto the adenine at position 37 in tRNAs that read codons beginning with uridine, leading to the formation of N6-(dimethylallyl)adenosine (i(6)A). In Acidothermus cellulolyticus (strain ATCC 43068 / DSM 8971 / 11B), this protein is tRNA dimethylallyltransferase.